The chain runs to 168 residues: MGAFTEKQEALVNSSFEAFKANLPHHSVVFFNSGSVHNSVFGLIKKQNNRILEKAPAAKNMFSFLGDAVDPKNPKLAGHAEKLFGLVRDSAVQLQTKGLVVADATLGPIHTQKGVTDLQFAVVKEALLKTIKEAVGDKWSEELSNAWEVAYDEIAAAIKKAMAIGSLV.

In terms of domain architecture, Globin spans 3 to 163 (AFTEKQEALV…IAAAIKKAMA (161 aa)). Residue S63 participates in heme b binding. S63 carries the post-translational modification Phosphoserine. Residue H79 coordinates O2. The heme b site is built by K82, H110, and K113. The residue at position 151 (Y151) is a Nitrated tyrosine.

This sequence belongs to the plant globin family. Monomer. Nitrated in effective nodules and particularly in hypoxic conditions; this mechanism may play a protective role in the symbiosis by buffering toxic peroxynitrite NO(2)(-). Nitration level decrease during nodule senescence. In terms of processing, phosphorylation at Ser-63 disrupts the molecular environment of its porphyrin ring oxygen binding pocket, thus leading to a reduced oxygen consumption and to the delivery of oxygen O(2) to symbiosomes. As to expression, expressed in root nodules and flowers.

It is found in the cytoplasm. It localises to the cytosol. Its subcellular location is the nucleus. Functionally, leghemoglobin that reversibly binds oxygen O(2) through a pentacoordinated heme iron. In root nodules, facilitates the diffusion of oxygen to the bacteroids while preventing the bacterial nitrogenase from being inactivated by buffering dioxygen, nitric oxide and carbon monoxide, and promoting the formation of reactive oxygen species (ROS, e.g. H(2)O(2)). This role is essential for symbiotic nitrogen fixation (SNF). Maybe involved in water stress tolerance. This is Leghemoglobin 5 from Glycine max (Soybean).